The following is a 368-amino-acid chain: Phosphate acyltransferase (368 aa).

The protein belongs to the PlsX family. As to quaternary structure, homodimer. Probably interacts with PlsY.

It localises to the cytoplasm. The catalysed reaction is a fatty acyl-[ACP] + phosphate = an acyl phosphate + holo-[ACP]. It participates in lipid metabolism; phospholipid metabolism. Catalyzes the reversible formation of acyl-phosphate (acyl-PO(4)) from acyl-[acyl-carrier-protein] (acyl-ACP). This enzyme utilizes acyl-ACP as fatty acyl donor, but not acyl-CoA. This chain is Phosphate acyltransferase, found in Methylibium petroleiphilum (strain ATCC BAA-1232 / LMG 22953 / PM1).